We begin with the raw amino-acid sequence, 84 residues long: Cytochrome b559 subunit alpha (84 aa).

The helical transmembrane segment at 22–36 (IIHSITIPSLFVAGF) threads the bilayer. Position 24 (His-24) interacts with heme.

Belongs to the PsbE/PsbF family. Heterodimer of an alpha subunit and a beta subunit. PSII is composed of 1 copy each of membrane proteins PsbA, PsbB, PsbC, PsbD, PsbE, PsbF, PsbH, PsbI, PsbJ, PsbK, PsbL, PsbM, PsbT, PsbX, PsbY, PsbZ, Psb30/Ycf12, at least 3 peripheral proteins of the oxygen-evolving complex and a large number of cofactors. It forms dimeric complexes. The cofactor is heme b.

The protein resides in the plastid. Its subcellular location is the chloroplast thylakoid membrane. Functionally, this b-type cytochrome is tightly associated with the reaction center of photosystem II (PSII). PSII is a light-driven water:plastoquinone oxidoreductase that uses light energy to abstract electrons from H(2)O, generating O(2) and a proton gradient subsequently used for ATP formation. It consists of a core antenna complex that captures photons, and an electron transfer chain that converts photonic excitation into a charge separation. The chain is Cytochrome b559 subunit alpha from Emiliania huxleyi (Coccolithophore).